A 412-amino-acid polypeptide reads, in one-letter code: uncharacterized protein (412 aa).

Residues Phe20–Gly199 enclose the UmuC domain.

It belongs to the DNA polymerase type-Y family.

This is an uncharacterized protein from Mycoplasma pneumoniae (strain ATCC 29342 / M129 / Subtype 1) (Mycoplasmoides pneumoniae).